The chain runs to 338 residues: tRNA-cytidine(32) 2-sulfurtransferase (338 aa).

The short motif at 86 to 91 is the PP-loop motif element; the sequence is SGGKDS. Residues cysteine 161, cysteine 164, and cysteine 252 each contribute to the [4Fe-4S] cluster site.

It belongs to the TtcA family. As to quaternary structure, homodimer. Requires Mg(2+) as cofactor. It depends on [4Fe-4S] cluster as a cofactor.

The protein resides in the cytoplasm. The catalysed reaction is cytidine(32) in tRNA + S-sulfanyl-L-cysteinyl-[cysteine desulfurase] + AH2 + ATP = 2-thiocytidine(32) in tRNA + L-cysteinyl-[cysteine desulfurase] + A + AMP + diphosphate + H(+). It participates in tRNA modification. Functionally, catalyzes the ATP-dependent 2-thiolation of cytidine in position 32 of tRNA, to form 2-thiocytidine (s(2)C32). The sulfur atoms are provided by the cysteine/cysteine desulfurase (IscS) system. This chain is tRNA-cytidine(32) 2-sulfurtransferase, found in Albidiferax ferrireducens (strain ATCC BAA-621 / DSM 15236 / T118) (Rhodoferax ferrireducens).